A 665-amino-acid chain; its full sequence is Prelamin-A/C (665 aa).

Position 1 is an N-acetylmethionine (methionine 1). The tract at residues 1 to 25 (METPSQRRATRSGAQASSTPLSPTR) is disordered. The tract at residues 1 to 33 (METPSQRRATRSGAQASSTPLSPTRITRLQEKE) is head. The segment at 1–130 (METPSQRRAT…TKKEGDLLAA (130 aa)) is interaction with MLIP. Threonine 3 is modified (phosphothreonine). Serine 5 carries the post-translational modification Phosphoserine. Threonine 10 carries the phosphothreonine modification. Residues serine 12 and serine 18 each carry the phosphoserine modification. Threonine 19 is subject to Phosphothreonine. Serine 22 is subject to Phosphoserine. Residues 31–387 (EKEDLQELND…KLLEGEEERL (357 aa)) enclose the IF rod domain. Lysine 32 bears the N6-acetyllysine; alternate mark. Lysine 32 is subject to N6-succinyllysine; alternate. Lysine 32 participates in a covalent cross-link: Glycyl lysine isopeptide (Lys-Gly) (interchain with G-Cter in SUMO2); alternate. Residues 34–70 (DLQELNDRLAVYIDRVRSLETENAGLRLRITESEEVV) form a coil 1A region. Phosphoserine occurs at positions 51, 66, and 71. Residues 71–80 (SREVSGIKAA) are linker 1. Residues lysine 78 and lysine 97 each carry the N6-acetyllysine modification. Residues 81–218 (YEAELGDARK…NIYSEELRET (138 aa)) form a coil 1B region. Lysine 97 participates in a covalent cross-link: Glycyl lysine isopeptide (Lys-Gly) (interchain with G-Cter in SUMO2). A Phosphoserine modification is found at serine 107. N6-acetyllysine is present on residues lysine 108, lysine 114, lysine 123, lysine 135, lysine 144, and lysine 155. Position 171 is an N6-acetyllysine; alternate (lysine 171). Lysine 171 is subject to N6-succinyllysine; alternate. A Glycyl lysine isopeptide (Lys-Gly) (interchain with G-Cter in SUMO2); alternate cross-link involves residue lysine 171. 3 positions are modified to N6-acetyllysine: lysine 180, lysine 201, and lysine 208. Lysine 201 participates in a covalent cross-link: Glycyl lysine isopeptide (Lys-Gly) (interchain with G-Cter in SUMO2); alternate. A Glycyl lysine isopeptide (Lys-Gly) (interchain with G-Cter in SUMO); alternate cross-link involves residue lysine 201. A Glycyl lysine isopeptide (Lys-Gly) (interchain with G-Cter in SUMO2) cross-link involves residue lysine 208. Residue serine 212 is modified to Phosphoserine. Residues lysine 219 and lysine 233 each participate in a glycyl lysine isopeptide (Lys-Gly) (interchain with G-Cter in SUMO2) cross-link. The interval 219–242 (KRRHETRLVEIDNGKQREFESRLA) is linker 2. Lysine 233, lysine 260, lysine 265, and lysine 270 each carry N6-acetyllysine. The coil 2 stretch occupies residues 243-383 (DALQELRAQH…HAYRKLLEGE (141 aa)). Lysine 260 is covalently cross-linked (Glycyl lysine isopeptide (Lys-Gly) (interchain with G-Cter in SUMO2); alternate). Lysine 270 participates in a covalent cross-link: Glycyl lysine isopeptide (Lys-Gly) (interchain with G-Cter in SUMO2); alternate. Phosphoserine is present on residues serine 277, serine 282, serine 301, and serine 307. A Glycyl lysine isopeptide (Lys-Gly) (interchain with G-Cter in SUMO2); alternate cross-link involves residue lysine 311. N6-acetyllysine is present on residues lysine 311, lysine 316, and lysine 341. Residues lysine 366 and lysine 378 each participate in a glycyl lysine isopeptide (Lys-Gly) (interchain with G-Cter in SUMO2) cross-link. Residues 384–442 (EERLRLSPSPTSQRSRGRASSHSSQSQGGGSVTKKRKLESSESRSSFSQHARTSGRVAV) form a disordered region. Positions 384–665 (EERLRLSPSP…SQSSQNCSIM (282 aa)) are tail. Phosphoserine occurs at positions 390, 392, 395, 398, 403, 404, 406, 407, 409, and 414. Serine 392 carries the post-translational modification Phosphoserine; by CDK1. Low complexity predominate over residues 395–409 (SQRSRGRASSHSSQS). Threonine 416 carries the phosphothreonine modification. N6-acetyllysine is present on residues lysine 417 and lysine 420. Residues lysine 417 and lysine 420 each participate in a glycyl lysine isopeptide (Lys-Gly) (interchain with G-Cter in SUMO2) cross-link. The short motif at 417–422 (KKRKLE) is the Nuclear localization signal element. Residues serine 423, serine 426, serine 429, and serine 431 each carry the phosphoserine modification. The LTD domain occupies 428–545 (SSFSQHARTS…EEVAMRKLVR (118 aa)). Lysine 450 is covalently cross-linked (Glycyl lysine isopeptide (Lys-Gly) (interchain with G-Cter in SUMO2); alternate). An N6-acetyllysine mark is found at lysine 450 and lysine 457. Serine 458, glutamate 460, and serine 463 each carry phosphoserine. Lysine 486 is modified (N6-acetyllysine). Lysine 486 is covalently cross-linked (Glycyl lysine isopeptide (Lys-Gly) (interchain with G-Cter in SUMO2)). Threonine 496 carries the post-translational modification Phosphothreonine. The residue at position 500 (serine 500) is a Phosphoserine. A phosphothreonine mark is found at threonine 505 and threonine 510. Serine 533 and serine 546 each carry phosphoserine. Threonine 548 carries the post-translational modification Phosphothreonine. The tract at residues 553 to 577 (NEDDDEDGEELLHHHRGSHCSGSGD) is disordered. Serine 570, cysteine 572, and serine 573 each carry phosphoserine. A Glycyl lysine isopeptide (Lys-Gly) (interchain with G-Cter in SUMO2); alternate cross-link involves residue lysine 599. Lysine 599 is covalently cross-linked (Glycyl lysine isopeptide (Lys-Gly) (interchain with G-Cter in SUMO1); alternate). 4 positions are modified to phosphoserine: serine 613, serine 614, serine 617, and serine 620. Serine 626 and serine 629 each carry an O-linked (GlcNAc) serine glycan. A phosphoserine mark is found at serine 629, serine 633, serine 637, and serine 653. Positions 648 to 662 (LLGNSSPRSQSSQNC) are cleaved as a propeptide — removed in Lamin-A/C form. At cysteine 662 the chain carries Cysteine methyl ester. The S-farnesyl cysteine moiety is linked to residue cysteine 662. Residues 663 to 665 (SIM) constitute a propeptide, removed in Prelamin-A/C form and in Lamin-A/C form.

This sequence belongs to the intermediate filament family. In terms of assembly, homodimer of lamin A and lamin C. Lamin dimers then assemble into dimeric head-to-tail polymers. Ultimately, two head-to-tail polymers assemble laterally into a protofilament with a uniformly shaped rod of 3.5 nm in diameter. Interacts with lamin-associated polypeptides IA, IB and TMPO-alpha, RB1 and with emerin. Proteolytically processed isoform A interacts with NARF. Interacts with SREBF1, SREBF2, SUN1, SUN2 and TMEM43. Interacts with TMEM201. Prelamin-A/C interacts with EMD. Interacts with DMPK; may regulate nuclear envelope stability. Interacts with MLIP. Interacts with SUV39H1; the interaction increases stability of SUV39H1. Interacts with ITSN1 isoform 2. Interacts with IFFO1; the interaction forms an interior nucleoskeleton and the recruitment to DNA double-strand breaks. As to quaternary structure, interacts with EMD. Interacts (via C-terminus) with LEMD2 (via N-terminus) (in vitro). Proteolytic cleavage of the C-terminal of 18 residues of prelamin-A/C results in the production of lamin-A/C. The prelamin-A/C maturation pathway includes farnesylation of CAAX motif by protein farnesyltransferase (FNTA and FNTB), removal of the last three amino acids (-AAX) by RCE1/FACE2 and/or ZMPSTE24, methylation of the C-terminal cysteine by ICMT and endoproteolytic removal of the last 15 C-terminal amino acids by ZMPSTE24. Proteolytic cleavage requires prior farnesylation and methylation, and absence of these blocks cleavage. In terms of processing, farnesylation of prelamin-A/C facilitates nuclear envelope targeting. Post-translationally, phosphorylation plays a key role in lamin organization, subcellular localization and nuclear envelope disintegration. Phosphorylation by CDK1 at Ser-22 and Ser-392 at the onset of mitosis drives lamin disassembly and nuclear envelope breakdown. Phosphorylation at Ser-22 and Ser-392 during interphase promotes localization to the nucleoplasm and regulates lamina assembly. Phosphorylation at Ser-22, Ser-392 and Ser-629 during interphase causes redistribution between the nucleus and the cytoplasm. Phosphorylation at Ser-22 by CDK1 regulates matrix stiffness. Phosphorylation status of Ser-22 determines its localization between double-strand break (DSB) sites and the nuclear matrix. Phosphorylated by ATR at Ser-282 in response to DNA damage, leading to lamin disassembly and nuclear envelope rupture. Phosphorylation also regulates stability in micronuclei arising from genome instability: phosphorylation at Ser-395 by ATR in response to genome instability and double-stranded DNA breaks primes LMNA for subsequent phosphorylation at Ser-392 by CDK1 and micronuclei envelope rupture. The rupture of micronuclear envelope triggers the cGAS-STING pathway thereby activating the type I interferon response and innate immunity. Isoform C is phosphorylated on Ser-392, Ser-407 and Ser-409 at interphase. In terms of processing, acetylation by KAT8 is required for nuclear architecture. Post-translationally, sumoylation is necessary for the localization to the nuclear envelope. The N-terminus is blocked. Expressed in liver and in bone marrow (at protein level). Expressed in cardiomyocytes. In terms of tissue distribution, specifically expressed in germ cells.

Its subcellular location is the nucleus lamina. It is found in the nucleus envelope. The protein localises to the nucleus. The protein resides in the nucleoplasm. It localises to the nucleus matrix. Functionally, lamins are intermediate filament proteins that assemble into a filamentous meshwork, and which constitute the major components of the nuclear lamina, a fibrous layer on the nucleoplasmic side of the inner nuclear membrane. Lamins provide a framework for the nuclear envelope, bridging the nuclear envelope and chromatin, thereby playing an important role in nuclear assembly, chromatin organization, nuclear membrane and telomere dynamics. Lamin A and C also regulate matrix stiffness by conferring nuclear mechanical properties. The structural integrity of the lamina is strictly controlled by the cell cycle, as seen by the disintegration and formation of the nuclear envelope in prophase and telophase, respectively. Lamin A and C are present in equal amounts in the lamina of mammals. Also invoved in DNA repair: recruited by DNA repair proteins XRCC4 and IFFO1 to the DNA double-strand breaks (DSBs) to prevent chromosome translocation by immobilizing broken DNA ends. Required for normal development of peripheral nervous system and skeletal muscle and for muscle satellite cell proliferation. Required for osteoblastogenesis and bone formation. Also prevents fat infiltration of muscle and bone marrow, helping to maintain the volume and strength of skeletal muscle and bone. Required for cardiac homeostasis. In terms of biological role, prelamin-A/C can accelerate smooth muscle cell senescence. It acts to disrupt mitosis and induce DNA damage in vascular smooth muscle cells (VSMCs), leading to mitotic failure, genomic instability, and premature senescence. Isoform C2 may have a role in determining the organization of nuclear and chromosomal structures during spermatogenesis. The chain is Prelamin-A/C (Lmna) from Mus musculus (Mouse).